The sequence spans 198 residues: NADH-quinone oxidoreductase subunit C (198 aa).

This sequence belongs to the complex I 30 kDa subunit family. As to quaternary structure, NDH-1 is composed of 14 different subunits. Subunits NuoB, C, D, E, F, and G constitute the peripheral sector of the complex.

It localises to the cell inner membrane. It catalyses the reaction a quinone + NADH + 5 H(+)(in) = a quinol + NAD(+) + 4 H(+)(out). In terms of biological role, NDH-1 shuttles electrons from NADH, via FMN and iron-sulfur (Fe-S) centers, to quinones in the respiratory chain. The immediate electron acceptor for the enzyme in this species is believed to be ubiquinone. Couples the redox reaction to proton translocation (for every two electrons transferred, four hydrogen ions are translocated across the cytoplasmic membrane), and thus conserves the redox energy in a proton gradient. This is NADH-quinone oxidoreductase subunit C from Herminiimonas arsenicoxydans.